A 71-amino-acid chain; its full sequence is General transcription and DNA repair factor IIH subunit TFB5 (71 aa).

The protein belongs to the TFB5 family. In terms of assembly, component of the 7-subunit TFIIH core complex composed of XPB, XPD, TFB1/GTF2H1, GTF2H2/P44, TFB4/GTF2H3, TFB2/GTF2H4 and TFB5/GTF2H5, which is active in NER. The core complex associates with the 3-subunit CDK-activating kinase (CAK) module composed of CYCH1/cyclin H1, CDKD and MAT1/At4g30820 to form the 10-subunit holoenzyme (holo-TFIIH) active in transcription.

The protein localises to the nucleus. Its function is as follows. Component of the general transcription and DNA repair factor IIH (TFIIH) core complex, which is involved in general and transcription-coupled nucleotide excision repair (NER) of damaged DNA and, when complexed to CAK, in RNA transcription by RNA polymerase II. In NER, TFIIH acts by opening DNA around the lesion to allow the excision of the damaged oligonucleotide and its replacement by a new DNA fragment. In transcription, TFIIH has an essential role in transcription initiation. When the pre-initiation complex (PIC) has been established, TFIIH is required for promoter opening and promoter escape. Phosphorylation of the C-terminal tail (CTD) of the largest subunit of RNA polymerase II by the kinase module CAK controls the initiation of transcription. This chain is General transcription and DNA repair factor IIH subunit TFB5, found in Arabidopsis thaliana (Mouse-ear cress).